Reading from the N-terminus, the 259-residue chain is Small ribosomal subunit protein mS23 (259 aa).

Positions 230 to 244 (RAASFTGSALPSSEE) are enriched in polar residues. The tract at residues 230-259 (RAASFTGSALPSSEESAPVDEETEKVPQQV) is disordered.

This sequence belongs to the mitochondrion-specific ribosomal protein mS23 family. As to quaternary structure, component of the mitochondrial small ribosomal subunit.

Its subcellular location is the mitochondrion. The chain is Small ribosomal subunit protein mS23 (rsm25) from Aspergillus terreus (strain NIH 2624 / FGSC A1156).